The sequence spans 156 residues: Arginine repressor (156 aa).

This sequence belongs to the ArgR family.

The protein localises to the cytoplasm. It participates in amino-acid biosynthesis; L-arginine biosynthesis [regulation]. Regulates arginine biosynthesis genes. This chain is Arginine repressor, found in Yersinia enterocolitica serotype O:8 / biotype 1B (strain NCTC 13174 / 8081).